The sequence spans 612 residues: Adherence factor (612 aa).

Composition is skewed to low complexity over residues 1 to 18, 47 to 68, 94 to 106, 115 to 141, 182 to 203, and 218 to 228; these read MSSF…NLSS, SSMM…QQQQ, LQTQ…SATT, YNQQ…NNMQ, QSAQ…QPRS, and SRQVSGSGRST. Disordered stretches follow at residues 1–20, 46–68, 94–143, 179–273, 443–480, 497–527, and 546–612; these read MSSF…SSFQ, ASSM…QQQQ, LQTQ…MQFF, PQLQ…NNNK, KEKK…NTNN, SQLM…LSNN, and SQEQ…KQFY. Residues 230–240 are compositionally biased toward polar residues; it reads AKKQSAITSGS. Residues 254 to 272 are compositionally biased toward low complexity; it reads TSVANSTSTTTMTTTNNNN. Residues 443–457 show a composition bias toward basic and acidic residues; it reads KEKKLTEKTIEQREQ. 2 stretches are compositionally biased toward polar residues: residues 465–480 and 497–512; these read ANHS…NTNN and SQLM…ATKI. Basic residues predominate over residues 555-571; that stretch reads NQHHHNHQQHPLIHHHQ. The span at 585 to 606 shows a compositional bias: low complexity; sequence PSTIPTSSLSIQQQQQQQQQQL.

Surface antigen mediating adhesion and aggregation in S.cerevisiae. This Candida albicans (strain SC5314 / ATCC MYA-2876) (Yeast) protein is Adherence factor (ADF1).